The primary structure comprises 242 residues: Aliphatic sulfonates import ATP-binding protein SsuB 1 (242 aa).

In terms of domain architecture, ABC transporter spans 11–227; the sequence is VAVRRLSRAF…RPSHPDFEDL (217 aa). 43 to 50 provides a ligand contact to ATP; sequence GESGSGKT.

It belongs to the ABC transporter superfamily. Aliphatic sulfonates importer (TC 3.A.1.17.2) family. As to quaternary structure, the complex is composed of two ATP-binding proteins (SsuB), two transmembrane proteins (SsuC) and a solute-binding protein (SsuA).

The protein resides in the cell inner membrane. The enzyme catalyses ATP + H2O + aliphatic sulfonate-[sulfonate-binding protein]Side 1 = ADP + phosphate + aliphatic sulfonateSide 2 + [sulfonate-binding protein]Side 1.. Its function is as follows. Part of the ABC transporter complex SsuABC involved in aliphatic sulfonates import. Responsible for energy coupling to the transport system. The sequence is that of Aliphatic sulfonates import ATP-binding protein SsuB 1 from Paracoccus denitrificans (strain Pd 1222).